Here is a 204-residue protein sequence, read N- to C-terminus: UPF0056 membrane protein CT_852 (204 aa).

Transmembrane regions (helical) follow at residues 9–29, 39–59, 66–86, 107–127, 138–158, and 176–196; these read TLLFYALFNALGSLPVFIALL, HIILRESIFALLLLLLFVTFG, LGIILPAFQFTGSLLLGSIAI, IFFPLAFPVITGPAMITSTLG, IVLGAIVLAWLFSLITLLLSS, and FGISLALMAGNLMLKALSTAF.

It belongs to the UPF0056 (MarC) family.

It localises to the cell membrane. This Chlamydia trachomatis serovar D (strain ATCC VR-885 / DSM 19411 / UW-3/Cx) protein is UPF0056 membrane protein CT_852.